Reading from the N-terminus, the 111-residue chain is P antigen family member 2 (111 aa).

The interval 1–66 is disordered; sequence MSELLRARSQ…NQAVPAFQGP (66 aa). Residues 8 to 24 are compositionally biased toward polar residues; the sequence is RSQSSERGNDQESSQPV.

Belongs to the GAGE family.

The sequence is that of P antigen family member 2 (PAGE2) from Homo sapiens (Human).